The primary structure comprises 744 residues: Collagen alpha-1(VIII) chain (744 aa).

Positions 1 to 27 (MAVLPGPLQLLGVLLTISLSSIRLIQA) are cleaved as a signal peptide. Residues 29 to 117 (AYYGIKPLPP…GKEIPLASLR (89 aa)) form a nonhelical region (NC2) region. 2 disordered regions span residues 115–393 (SLRG…GEPG) and 459–589 (GPKG…PDMG). The interval 118-571 (GEQGPRGEPG…PGPPGPPGPP (454 aa)) is triple-helical region (COL1). The segment covering 128–137 (PRGPPGPPGL) has biased composition (pro residues). The segment covering 168-178 (KPGAMGMPGAK) has biased composition (low complexity). Composition is skewed to gly residues over residues 203 to 217 (GLPG…GLPG) and 328 to 337 (GFPGGKGEQG). 2 stretches are compositionally biased toward low complexity: residues 466–496 (QKGV…LQGP) and 538–556 (AGLH…QGQP). The span at 558–581 (LPGPPGPPGPPGPPAVMPPTPPPQ) shows a compositional bias: pro residues. Positions 572 to 744 (AVMPPTPPPQ…SFSGYLLYPM (173 aa)) are nonhelical region (NC1). The 134-residue stretch at 611–744 (PAYEMPAFTA…SFSGYLLYPM (134 aa)) folds into the C1q domain.

Homotrimers, or heterotrimers in association with alpha 2(VIII) type collagens. Four homotrimers can form a tetrahedron stabilized by central interacting C-terminal NC1 trimers. Prolines at the third position of the tripeptide repeating unit (G-X-Y) are hydroxylated in some or all of the chains. In terms of processing, proteolytically cleaved by neutrophil elastase, in vitro. Proteolytic processing produces the C-terminal NC1 domain fragment, vastatin. Expressed primarily in the subendothelium of large blood vessels. Also expressed in arterioles and venules in muscle, heart, kidney, spleen, umbilical cord, liver and lung and is also found in connective tissue layers around hair follicles, around nerve bundles in muscle, in the dura of the optic nerve, in cornea and sclera, and in the perichondrium of cartilaginous tissues. In the kidney, expressed in mesangial cells, glomerular endothelial cells, and tubular epithelial cells. Also expressed in mast cells, and in astrocytes during the repair process. Expressed in Descemet's membrane. Specifically expressed in peritoneal fibroblasts and mesothelial cells.

It is found in the secreted. The protein resides in the extracellular space. It localises to the extracellular matrix. Its subcellular location is the basement membrane. Its function is as follows. Macromolecular component of the subendothelium. Major component of the Descemet's membrane (basement membrane) of corneal endothelial cells. Also a component of the endothelia of blood vessels. Necessary for migration and proliferation of vascular smooth muscle cells and thus, has a potential role in the maintenance of vessel wall integrity and structure, in particular in atherogenesis. In terms of biological role, vastatin, the C-terminal fragment comprising the NC1 domain, inhibits aortic endothelial cell proliferation and causes cell apoptosis. This Homo sapiens (Human) protein is Collagen alpha-1(VIII) chain (COL8A1).